The chain runs to 64 residues: Phylloxin-S1 (64 aa).

The signal sequence occupies residues 1-22 (MVFLKKSLLLVLFVGLVSLSIC). Residues 23–44 (EENKREEHEEVEENAEKAEEKR) constitute a propeptide that is removed on maturation. Glutamine 63 carries the glutamine amide modification.

In terms of tissue distribution, expressed by the skin glands.

It is found in the secreted. Functionally, antimicrobial peptide against both Gram-positive and Gram-negative bacteria. The sequence is that of Phylloxin-S1 from Phyllomedusa sauvagei (Sauvage's leaf frog).